We begin with the raw amino-acid sequence, 772 residues long: Probable adenosine deaminase (772 aa).

Zn(2+) contacts are provided by His-22 and His-24. The substrate site is built by His-24, Asp-26, and Gly-180. His-207 contacts Zn(2+). Glu-210 functions as the Proton donor in the catalytic mechanism. Asp-288 provides a ligand contact to Zn(2+).

Belongs to the metallo-dependent hydrolases superfamily. Adenosine and AMP deaminases family. Zn(2+) is required as a cofactor.

It catalyses the reaction adenosine + H2O + H(+) = inosine + NH4(+). Functionally, catalyzes the hydrolytic deamination of adenosine. Plays an important role in purine metabolism and in adenosine homeostasis, and may thereby contribute to cellular signaling events. The protein is Probable adenosine deaminase (ada) of Dictyostelium discoideum (Social amoeba).